Consider the following 355-residue polypeptide: S-adenosylmethionine:tRNA ribosyltransferase-isomerase (355 aa).

Belongs to the QueA family. As to quaternary structure, monomer.

It localises to the cytoplasm. It catalyses the reaction 7-aminomethyl-7-carbaguanosine(34) in tRNA + S-adenosyl-L-methionine = epoxyqueuosine(34) in tRNA + adenine + L-methionine + 2 H(+). The protein operates within tRNA modification; tRNA-queuosine biosynthesis. Transfers and isomerizes the ribose moiety from AdoMet to the 7-aminomethyl group of 7-deazaguanine (preQ1-tRNA) to give epoxyqueuosine (oQ-tRNA). The chain is S-adenosylmethionine:tRNA ribosyltransferase-isomerase from Pectobacterium carotovorum subsp. carotovorum (strain PC1).